A 141-amino-acid polypeptide reads, in one-letter code: Large ribosomal subunit protein uL11 (141 aa).

Belongs to the universal ribosomal protein uL11 family. As to quaternary structure, part of the ribosomal stalk of the 50S ribosomal subunit. Interacts with L10 and the large rRNA to form the base of the stalk. L10 forms an elongated spine to which L12 dimers bind in a sequential fashion forming a multimeric L10(L12)X complex. One or more lysine residues are methylated.

Forms part of the ribosomal stalk which helps the ribosome interact with GTP-bound translation factors. This Acaryochloris marina (strain MBIC 11017) protein is Large ribosomal subunit protein uL11.